The primary structure comprises 1241 residues: ATP-dependent helicase/nuclease subunit A (1241 aa).

The UvrD-like helicase ATP-binding domain occupies 12–485 (SQWTDDQWKA…IDLAKNFRSR (474 aa)). 33-40 (AAAGSGKT) lines the ATP pocket. The 301-residue stretch at 505–805 (GEIDYDADAE…RIMTIHKSKG (301 aa)) folds into the UvrD-like helicase C-terminal domain.

The protein belongs to the helicase family. AddA subfamily. In terms of assembly, heterodimer of AddA and AddB/RexB. Mg(2+) is required as a cofactor.

It carries out the reaction Couples ATP hydrolysis with the unwinding of duplex DNA by translocating in the 3'-5' direction.. It catalyses the reaction ATP + H2O = ADP + phosphate + H(+). Its function is as follows. The heterodimer acts as both an ATP-dependent DNA helicase and an ATP-dependent, dual-direction single-stranded exonuclease. Recognizes the chi site generating a DNA molecule suitable for the initiation of homologous recombination. The AddA nuclease domain is required for chi fragment generation; this subunit has the helicase and 3' -&gt; 5' nuclease activities. In Bacillus cereus (strain B4264), this protein is ATP-dependent helicase/nuclease subunit A.